Consider the following 497-residue polypeptide: Cysteine-rich secretory protein LCCL domain-containing 2 (497 aa).

Positions 1–22 are cleaved as a signal peptide; it reads MSCVLGGVIPLGLLFLVCGSQG. The N-linked (GlcNAc...) asparagine glycan is linked to asparagine 27. In terms of domain architecture, SCP spans 62 to 200; sequence LHNKLRGQVQ…ENAVYFVCNY (139 aa). LCCL domains lie at 284–379 and 385–488; these read MTQV…SSSF and KVQD…RDGK. Disulfide bonds link cysteine 290–cysteine 308, cysteine 312–cysteine 332, cysteine 391–cysteine 413, and cysteine 417–cysteine 440.

It belongs to the CRISP family. Binds to heparin, dermatan sulfate and chondroitin sulfate.

The protein localises to the secreted. Promotes matrix assembly. The chain is Cysteine-rich secretory protein LCCL domain-containing 2 (CRISPLD2) from Homo sapiens (Human).